The primary structure comprises 388 residues: Succinate--CoA ligase [ADP-forming] subunit beta (388 aa).

In terms of domain architecture, ATP-grasp spans 9–244 (KQIFAQYGLP…PSQEDAREAA (236 aa)). ATP is bound by residues Lys46, 53–55 (GRG), Glu99, Ala102, and Glu107. The Mg(2+) site is built by Asn199 and Asp213. Substrate contacts are provided by residues Asn264 and 321–323 (GIV).

It belongs to the succinate/malate CoA ligase beta subunit family. Heterotetramer of two alpha and two beta subunits. Mg(2+) is required as a cofactor.

The enzyme catalyses succinate + ATP + CoA = succinyl-CoA + ADP + phosphate. The catalysed reaction is GTP + succinate + CoA = succinyl-CoA + GDP + phosphate. It functions in the pathway carbohydrate metabolism; tricarboxylic acid cycle; succinate from succinyl-CoA (ligase route): step 1/1. Functionally, succinyl-CoA synthetase functions in the citric acid cycle (TCA), coupling the hydrolysis of succinyl-CoA to the synthesis of either ATP or GTP and thus represents the only step of substrate-level phosphorylation in the TCA. The beta subunit provides nucleotide specificity of the enzyme and binds the substrate succinate, while the binding sites for coenzyme A and phosphate are found in the alpha subunit. This chain is Succinate--CoA ligase [ADP-forming] subunit beta, found in Mannheimia succiniciproducens (strain KCTC 0769BP / MBEL55E).